The primary structure comprises 277 residues: MALKHFNPITPGQRQLVIVDRSELYKGKPVKPLTEGLSKKGGRNNTGRITVRFQGGGHKRSYRFIDFKRRKLDVVGTVERLEYDPNRTAFIALIRYTDGELAYILAPQRLAVGDQVVAGNSVDVKPGNAMPLSSMPVGTIIHNVELKPGKGGQIARSAGTYAQLVGRDQGMAILRLNSGEQRLVSGACFASVGAVSNPDHGNINDGKAGRSVWRGKRPHVRGVAMNPVDHPHGGGEGRTSGGRHPVTPWGKPTKGKKTRSNKATDKFIMRSRHQRKK.

Positions 222 to 277 are disordered; that stretch reads GVAMNPVDHPHGGGEGRTSGGRHPVTPWGKPTKGKKTRSNKATDKFIMRSRHQRKK.

Belongs to the universal ribosomal protein uL2 family. Part of the 50S ribosomal subunit. Forms a bridge to the 30S subunit in the 70S ribosome.

Its function is as follows. One of the primary rRNA binding proteins. Required for association of the 30S and 50S subunits to form the 70S ribosome, for tRNA binding and peptide bond formation. It has been suggested to have peptidyltransferase activity; this is somewhat controversial. Makes several contacts with the 16S rRNA in the 70S ribosome. This chain is Large ribosomal subunit protein uL2, found in Brucella canis (strain ATCC 23365 / NCTC 10854 / RM-666).